The sequence spans 423 residues: MAFQIPRGTQDILPGEVEKWQYVEKIARDICKRYNYHEIRTPIFEHTELFLRGVGDTTDIVQKEMYTFEDRAGRSMTLRPEGTAPVVRSFVENKMYGNPNQPIKLYYIGPMFRYERPQAGRFRQFVQFGVEAIGSNDPAIDAEVIAMAMELYRSLGLKKLRLVINSLGDVETRKAHRQALIDHFKSRIHELCEDCQVRLEKNPLRILDCKKDRDHELMATAPSILDYLNDESRHYFEKVKAYLTKLGIPFEVDPRLVRGLDYYHHTTFEIMSDAEGFGAITTLCGGGRYSGLVQEIGGPETPGIGFALSIERLLAALEAEGITLPISEGIDCYVVAVGEKAKDESILLVHKLRKAGIVADKDYQDRKIKAQLKSADRLNAKFVAILGDDELAKEVINIKEMSTGEQTEVPLHSVVDYLKERLS.

This sequence belongs to the class-II aminoacyl-tRNA synthetase family. As to quaternary structure, homodimer.

It localises to the cytoplasm. The catalysed reaction is tRNA(His) + L-histidine + ATP = L-histidyl-tRNA(His) + AMP + diphosphate + H(+). In Geobacillus sp. (strain WCH70), this protein is Histidine--tRNA ligase.